Consider the following 745-residue polypeptide: Copper-transporting ATPase (745 aa).

The 67-residue stretch at 1-67 (MKESFYIEGM…LIEKLGYSPK (67 aa)) folds into the HMA domain. At 1-83 (MKESFYIEGM…KKEFFSPNVK (83 aa)) the chain is on the cytoplasmic side. Residues Cys12 and Cys15 each contribute to the Cu cation site. A helical membrane pass occupies residues 84 to 104 (LALAVIFTLFVVYLSMGAMLS). At 105–124 (PSLLPESLLAIDNHSNFLNA) the chain is on the extracellular side. Residues 125–144 (CLQLIGALIVMHLGRDFYIQ) traverse the membrane as a helical segment. Over 145-151 (GFKALWH) the chain is Cytoplasmic. The helical transmembrane segment at 152–172 (RQPNMSSLIAIGTSAALISSL) threads the bilayer. At 173–194 (WQLYLVYTNHYTDQWSYGHYYF) the chain is on the extracellular side. A helical transmembrane segment spans residues 195–215 (ESVCVILMFVMVGKRIENVSK). The Cytoplasmic segment spans residues 216 to 343 (DKALDAMQAL…KAEISRLADK (128 aa)). The helical transmembrane segment at 344–366 (VSSVFVPSVIAISILAFVVWLII) threads the bilayer. Residues 367 to 379 (APKPDFWWNFGIA) lie on the Extracellular side of the membrane. The chain crosses the membrane as a helical span at residues 380 to 397 (LEVFVSVLVISCPCALGL). Topologically, residues 398-685 (ATPMSILVAN…KLSQATIKNI (288 aa)) are cytoplasmic. Asp435 acts as the 4-aspartylphosphate intermediate in catalysis. Residues Asp631 and Asp635 each contribute to the Mg(2+) site. Residues 686–705 (KENLFWAFCYNSVFIPLACG) traverse the membrane as a helical segment. Residues 706 to 716 (VLYKANLMLSP) are Extracellular-facing. The chain crosses the membrane as a helical span at residues 717-735 (AIAGLAMSLSSVSVVLNSQ). The Cytoplasmic portion of the chain corresponds to 736 to 745 (RLRNFKIKDH).

It belongs to the cation transport ATPase (P-type) (TC 3.A.3) family. Type IB subfamily.

It localises to the cell membrane. It catalyses the reaction Cu(2+)(in) + ATP + H2O = Cu(2+)(out) + ADP + phosphate + H(+). Its function is as follows. Probably involved in copper export. The chain is Copper-transporting ATPase (copA) from Helicobacter pylori (strain ATCC 700392 / 26695) (Campylobacter pylori).